We begin with the raw amino-acid sequence, 476 residues long: CDK5 and ABL1 enzyme substrate 2 (476 aa).

A disordered region spans residues 1–119 (MAAAAAGGAP…GLGLDGQRQR (119 aa)). Basic residues predominate over residues 30–40 (PRRRGDSRRRQ). The span at 65-96 (PAPPPPPPTEAREAPAPPPAPPGGLPGLPARP) shows a compositional bias: pro residues. Ser128 and Ser206 each carry phosphoserine. The interval 256 to 295 (DSHGLLPQPRPSIPRAPPGSRHKPVPTKSTPAGTELGSDG) is disordered. A compositionally biased stretch (pro residues) spans 263 to 272 (QPRPSIPRAP).

It belongs to the cyclin family. As to quaternary structure, binds to CDK3, CDK5 and ABL1. The C-terminal cyclin-box-like region binds to CDK5. Widely expressed.

Its function is as follows. Unknown. Probably involved in G1-S cell cycle transition. In Mus musculus (Mouse), this protein is CDK5 and ABL1 enzyme substrate 2 (Cables2).